The primary structure comprises 778 residues: Beta-phellandrene synthase (neryl-diphosphate-cyclizing), chloroplastic (778 aa).

The transit peptide at methionine 1–arginine 36 directs the protein to the chloroplast. Mg(2+)-binding residues include aspartate 531, asparagine 676, and glutamate 684. A DDXXD motif motif is present at residues aspartate 531 to glutamate 535.

Belongs to the terpene synthase family. Tpse subfamily. It depends on Mg(2+) as a cofactor. In terms of tissue distribution, trichomes.

It localises to the plastid. The protein resides in the chloroplast. The enzyme catalyses neryl diphosphate = beta-phellandrene + diphosphate. In terms of biological role, monoterpene synthase catalyzing the production of beta-phellandrene from neryl diphosphate. Also produces lower amounts of delta-2-carene, alpha-phellandrene and limonene. When incubated in vitro with geranyl diphosphate, catalyzes the formation of acyclic myrcene and ocimene as major products in addition to beta-phellandrene. This chain is Beta-phellandrene synthase (neryl-diphosphate-cyclizing), chloroplastic (PHS1), found in Solanum lycopersicum (Tomato).